Reading from the N-terminus, the 395-residue chain is MTTPFKRVHLIVMDSVGIGEGPDAKAFDDEGSHTLKHTLEGFEQSLPNLQKLGLGNIEPLPVIDKEVEPQAFYTKMSEASVGKDTMTGHWEIMGLNIMQPFKVYPEGFPEELVNEIETLTGRKVVANRPASGTQIIDEWGEHQMKTGDLIVYTSADPVLQIAAHEDIIPLEELYDICEKVRELTKDPKYLIGRIIARPYIGEPGSFKRTSNRHDYALKPFGRTVMNELKDNGYDVIALGKINDIFDGEGVTESIRTKDNMDGIDKLIETVQRDFNGLSFLNLVDFDALYGHRRDKPGYAQAIKDFDERLSELMNHLQEEDLVIITADHGNDPTADGTDHTREYIPVLMFSPKMTDYHELTIDSTFSSLGATIADNFGVKLPEFGKSYLKEMGVEK.

6 residues coordinate Mn(2+): aspartate 14, aspartate 286, histidine 291, aspartate 327, histidine 328, and histidine 339.

The protein belongs to the phosphopentomutase family. Mn(2+) is required as a cofactor.

The protein resides in the cytoplasm. The enzyme catalyses 2-deoxy-alpha-D-ribose 1-phosphate = 2-deoxy-D-ribose 5-phosphate. It catalyses the reaction alpha-D-ribose 1-phosphate = D-ribose 5-phosphate. Its pathway is carbohydrate degradation; 2-deoxy-D-ribose 1-phosphate degradation; D-glyceraldehyde 3-phosphate and acetaldehyde from 2-deoxy-alpha-D-ribose 1-phosphate: step 1/2. In terms of biological role, isomerase that catalyzes the conversion of deoxy-ribose 1-phosphate (dRib-1-P) and ribose 1-phosphate (Rib-1-P) to deoxy-ribose 5-phosphate (dRib-5-P) and ribose 5-phosphate (Rib-5-P), respectively. The polypeptide is Phosphopentomutase (Staphylococcus saprophyticus subsp. saprophyticus (strain ATCC 15305 / DSM 20229 / NCIMB 8711 / NCTC 7292 / S-41)).